Here is a 334-residue protein sequence, read N- to C-terminus: Replication factor C small subunit (334 aa).

An ATP-binding site is contributed by 49–56 (GPPGVGKT).

Belongs to the activator 1 small subunits family. RfcS subfamily. As to quaternary structure, heteromultimer composed of small subunits (RfcS) and large subunits (RfcL).

In terms of biological role, part of the RFC clamp loader complex which loads the PCNA sliding clamp onto DNA. The polypeptide is Replication factor C small subunit (Methanosarcina barkeri (strain Fusaro / DSM 804)).